We begin with the raw amino-acid sequence, 471 residues long: Putative ETHYLENE INSENSITIVE 3-like 4 protein (471 aa).

Positions 280-316 (DLKISEDQDDQESSGSKRKSESMEPSKSVYTCQNSSC) are disordered. Residues 304–316 (PSKSVYTCQNSSC) show a composition bias toward polar residues.

The protein belongs to the EIN3 family.

Its subcellular location is the nucleus. Putative transcription factor that may be involved in the ethylene response pathway. The protein is Putative ETHYLENE INSENSITIVE 3-like 4 protein (EIL4) of Arabidopsis thaliana (Mouse-ear cress).